Here is a 301-residue protein sequence, read N- to C-terminus: Tetratricopeptide repeat domain-containing protein PYG7, chloroplastic (301 aa).

The transit peptide at 1-61 (MFESNMVLQT…FHDYVFAEIS (61 aa)) directs the protein to the chloroplast. The next 2 helical transmembrane spans lie at 82-102 (TFLL…AAAA) and 121-141 (IQLS…FYVI). 3 TPR repeats span residues 168–201 (ATEL…WDGD), 206–239 (AQVY…QPGY), and 240–273 (VTAW…DPNN).

Interacts with PSA3.

Its subcellular location is the plastid. The protein resides in the chloroplast thylakoid membrane. Functionally, nuclear genome-encoded factor required for the accumulation of photosystem I (PSI). Functions as a PSI biogenesis factor. Cooperates with PSA3 to promote the stable assembly of PSI in the thylakoid membrane. May target primarily the PsaC subunit. This chain is Tetratricopeptide repeat domain-containing protein PYG7, chloroplastic, found in Arabidopsis thaliana (Mouse-ear cress).